The primary structure comprises 146 residues: Ribonuclease H (146 aa).

The region spanning 1–138 (MYAWTDGACR…ADALANRGID (138 aa)) is the RNase H type-1 domain. Mg(2+) is bound by residues Asp-6, Glu-44, Asp-66, and Asp-130.

The protein belongs to the RNase H family. Monomer. It depends on Mg(2+) as a cofactor.

The protein localises to the cytoplasm. The catalysed reaction is Endonucleolytic cleavage to 5'-phosphomonoester.. Its function is as follows. Endonuclease that specifically degrades the RNA of RNA-DNA hybrids. The polypeptide is Ribonuclease H (Alkalilimnicola ehrlichii (strain ATCC BAA-1101 / DSM 17681 / MLHE-1)).